A 295-amino-acid polypeptide reads, in one-letter code: UDP-N-acetylenolpyruvoylglucosamine reductase (295 aa).

Positions 26–189 (VGGRADVLFK…VEAEFKGVNS (164 aa)) constitute an FAD-binding PCMH-type domain. The active site involves R169. Catalysis depends on C218, which acts as the Proton donor. Residue E288 is part of the active site.

Belongs to the MurB family. FAD is required as a cofactor.

It is found in the cytoplasm. It catalyses the reaction UDP-N-acetyl-alpha-D-muramate + NADP(+) = UDP-N-acetyl-3-O-(1-carboxyvinyl)-alpha-D-glucosamine + NADPH + H(+). It participates in cell wall biogenesis; peptidoglycan biosynthesis. Functionally, cell wall formation. This chain is UDP-N-acetylenolpyruvoylglucosamine reductase, found in Wolbachia pipientis wMel.